The following is a 296-amino-acid chain: 4-hydroxy-tetrahydrodipicolinate synthase (296 aa).

Threonine 50 lines the pyruvate pocket. Catalysis depends on tyrosine 138, which acts as the Proton donor/acceptor. Lysine 166 serves as the catalytic Schiff-base intermediate with substrate. Isoleucine 208 serves as a coordination point for pyruvate.

This sequence belongs to the DapA family. In terms of assembly, homotetramer; dimer of dimers.

The protein localises to the cytoplasm. It catalyses the reaction L-aspartate 4-semialdehyde + pyruvate = (2S,4S)-4-hydroxy-2,3,4,5-tetrahydrodipicolinate + H2O + H(+). It functions in the pathway amino-acid biosynthesis; L-lysine biosynthesis via DAP pathway; (S)-tetrahydrodipicolinate from L-aspartate: step 3/4. In terms of biological role, catalyzes the condensation of (S)-aspartate-beta-semialdehyde [(S)-ASA] and pyruvate to 4-hydroxy-tetrahydrodipicolinate (HTPA). This is 4-hydroxy-tetrahydrodipicolinate synthase from Thiobacillus denitrificans (strain ATCC 25259 / T1).